Here is a 167-residue protein sequence, read N- to C-terminus: Aphrodisin (167 aa).

The first 16 residues, 1-16 (MVKILVLALVFSLAHA), serve as a signal peptide directing secretion. Gln-17 carries the post-translational modification Pyrrolidone carboxylic acid. Disulfide bonds link Cys-54–Cys-58 and Cys-73–Cys-165. N-linked (GlcNAc...) asparagine glycans are attached at residues Asn-57 and Asn-85.

It belongs to the calycin superfamily. Lipocalin family. Expressed in the vagina, uterus, and Bartholin's glands of female hamsters. Secreted in vaginal discharge.

Its subcellular location is the secreted. In terms of biological role, acts as an aphrodisiac pheromone, reliably eliciting copulatory behavior from male hamster. The sequence is that of Aphrodisin from Mesocricetus auratus (Golden hamster).